Reading from the N-terminus, the 146-residue chain is Transcription initiation factor TFIID subunit 10b (146 aa).

A disordered region spans residues 16 to 43 (GASSHGQSSGGGGGGDRDRTTPSSHLSD).

This sequence belongs to the TAF10 family. Belongs to the TFIID complex which is composed of TATA binding protein (Tbp) and a number of TBP-associated factors (TAFs). The N-terminus interacts with the histone fold of Taf8. As to expression, at embryonic stage 9, expression is seen in the mesodermal layer and midgut primordia. The mesoderm-specific expression persists in later stages of development and at its highest level is detected in midgut, hindgut, and differentiating somatic muscle fibers. Coexpressed with Taf10 in the lateral epidermis and anal plate.

The protein resides in the cytoplasm. It localises to the nucleus. In terms of biological role, TFIID is a multimeric protein complex that plays a central role in mediating promoter responses to various activators and repressors. This Drosophila melanogaster (Fruit fly) protein is Transcription initiation factor TFIID subunit 10b.